Here is a 188-residue protein sequence, read N- to C-terminus: Nicotinamide-nucleotide adenylyltransferase (188 aa).

It belongs to the archaeal NMN adenylyltransferase family.

It is found in the cytoplasm. The catalysed reaction is beta-nicotinamide D-ribonucleotide + ATP + H(+) = diphosphate + NAD(+). Its pathway is cofactor biosynthesis; NAD(+) biosynthesis; NAD(+) from nicotinamide D-ribonucleotide: step 1/1. This chain is Nicotinamide-nucleotide adenylyltransferase, found in Pyrococcus furiosus (strain ATCC 43587 / DSM 3638 / JCM 8422 / Vc1).